The following is a 270-amino-acid chain: Chlorophyll a-b binding protein, chloroplastic (270 aa).

Residues 1 to 41 (MASACASSTIAAVAFSSPSSQKNGSIVGATKASFLGGKRLR) constitute a chloroplast transit peptide. A chlorophyll b-binding site is contributed by tryptophan 68. The chlorophyll a site is built by phenylalanine 88, glutamate 107, and histidine 110. Arginine 112 contributes to the chlorophyll b binding site. A helical transmembrane segment spans residues 113–133 (WAMLGAAGIFIPEFLTKIGVL). Glutamine 144 serves as a coordination point for chlorophyll a. Residues 146–166 (YFTDTTTLFVIELVLIGWAEG) form a helical membrane-spanning segment. Residues valine 155, glutamate 165, and arginine 168 each contribute to the chlorophyll b site. Chlorophyll a contacts are provided by lysine 221, glutamate 222, asparagine 225, arginine 227, glutamine 239, and histidine 254. A helical transmembrane segment spans residues 228 to 248 (LAMLAVMGAWFQHIYTGTGPI).

This sequence belongs to the light-harvesting chlorophyll a/b-binding (LHC) protein family. The LHC complex consists of chlorophyll a-b binding proteins. Binds at least 14 chlorophylls (8 Chl-a and 6 Chl-b) and carotenoids such as lutein and neoxanthin. is required as a cofactor. Post-translationally, photoregulated by reversible phosphorylation of its threonine residues.

It localises to the plastid. Its subcellular location is the chloroplast thylakoid membrane. Functionally, the light-harvesting complex (LHC) functions as a light receptor, it captures and delivers excitation energy to photosystems with which it is closely associated. In Petunia hybrida (Petunia), this protein is Chlorophyll a-b binding protein, chloroplastic.